The sequence spans 1497 residues: Collagen alpha-1(XVII) chain (1497 aa).

2 disordered regions span residues 1-154 (MDVT…PSTR) and 167-186 (GSRSASVSPTRNSSNTLPIP). The Cytoplasmic portion of the chain corresponds to 1 to 467 (MDVTKKNKRD…CGSCCSWWKW (467 aa)). Residues 1-566 (MDVTKKNKRD…MMEQENGNLR (566 aa)) form a nonhelical region (NC16) region. Over residues 9–19 (RDGTEVTERIV) the composition is skewed to basic and acidic residues. 2 stretches are compositionally biased toward polar residues: residues 57 to 96 (LTHGSSGYINSTGSTRGHASTSSYRRAHSPASTLPNSPGS) and 169 to 183 (RSASVSPTRNSSNTL). The segment at 145 to 230 (RLQSASPSTR…WSSTLPAGSS (86 aa)) is necessary for interaction with DST and for the recruitment of DST to hemidesmosome. The helical; Signal-anchor for type II membrane protein transmembrane segment at 468–488 (LLGLLLTWLLLLGLLFGLIAL) threads the bilayer. The Extracellular segment spans residues 489 to 1497 (AEEVRKLKAR…RRRRSIAVKP (1009 aa)). Phosphoserine; by CK2 is present on Ser544. 3 disordered regions span residues 562-1011 (NGNL…SSSG), 1209-1234 (GLSFIPGPPGPPGPPGPRGPPGVSGA), and 1261-1316 (SFIV…TGGG). Residues 567 to 1482 (GSPGPKGDMG…KGEKGDKGDQ (916 aa)) are triple-helical region. The span at 590-602 (PGIPGPLGHPGPQ) shows a compositional bias: pro residues. 4 stretches are compositionally biased toward low complexity: residues 604-635 (PKGQKGSVGDPGMEGPMGQRGREGPMGPRGEA), 661-673 (PGSVGPKGSSGSP), 735-748 (EPGAKGAMGPAGPD), and 774-796 (DPGKPGLTGPQGPQGLPGTPGRP). 3 stretches are compositionally biased toward pro residues: residues 820–841 (PGPPGPPGAMGPPGPPGAPGPA), 858–881 (PPGPPGPRGPPGPSIPGPPGPRGP), and 907–916 (PPGPPGPPGP). 2 stretches are compositionally biased toward low complexity: residues 936-946 (GFSTSGSSSFG) and 968-987 (PGVPGALGIPSGPSEGGSSS). Composition is skewed to pro residues over residues 994–1004 (PPGPPGPPGPP), 1214–1228 (PGPPGPPGPPGPRGP), and 1266–1275 (PPGPPGPQGP). Residues 1289 to 1312 (SRGSSSSSHSSSVRRGSSYSSSMS) show a composition bias toward low complexity. An N-linked (GlcNAc...) asparagine glycan is attached at Asn1421. Residues 1434–1497 (GAIQGPPGQK…RRRRSIAVKP (64 aa)) form a disordered region. The span at 1458 to 1469 (AGPPGHPGPPGP) shows a compositional bias: pro residues. Residues 1472-1481 (HKGEKGDKGD) are compositionally biased toward basic and acidic residues. The nonhelical region (NC1) stretch occupies residues 1483–1497 (VYAGRRRRRSIAVKP). A compositionally biased stretch (basic residues) spans 1486–1497 (GRRRRRSIAVKP).

Homotrimers of alpha 1(XVII)chains. Interacts (via cytoplasmic region) with ITGB4 (via cytoplasmic region). Interacts (via cytoplasmic region) with DST isoform 3 (via N-terminus). Interacts (via N-terminus) with PLEC. Interacts (via cytoplasmic region) with DSP. In terms of processing, the intracellular/endo domain is disulfide-linked. Post-translationally, prolines at the third position of the tripeptide repeating unit (G-X-Y) are hydroxylated in some or all of the chains. The ectodomain is shedded from the surface of keratinocytes resulting in a 120-kDa soluble form, also named as 120 kDa linear IgA disease antigen. The shedding is mediated by membrane-bound metalloproteases. This cleavage is inhibited by phosphorylation at Ser-544. As to expression, detected in skin. In the cornea, it is detected in the epithelial basement membrane, the epithelial cells, and at a lower level in stromal cells (at protein level). Stratified squamous epithelia. Found in hemidesmosomes. Expressed in cornea, oral mucosa, esophagus, intestine, kidney collecting ducts, ureter, bladder, urethra and thymus but is absent in lung, blood vessels, skeletal muscle and nerves.

It is found in the cell junction. The protein resides in the hemidesmosome. Its subcellular location is the membrane. The protein localises to the secreted. It localises to the extracellular space. It is found in the extracellular matrix. The protein resides in the basement membrane. In terms of biological role, may play a role in the integrity of hemidesmosome and the attachment of basal keratinocytes to the underlying basement membrane. Functionally, the 120 kDa linear IgA disease antigen is an anchoring filament component involved in dermal-epidermal cohesion. Is the target of linear IgA bullous dermatosis autoantibodies. The chain is Collagen alpha-1(XVII) chain (COL17A1) from Homo sapiens (Human).